Consider the following 941-residue polypeptide: Glycine dehydrogenase (decarboxylating) (941 aa).

An N6-(pyridoxal phosphate)lysine modification is found at Lys-692.

This sequence belongs to the GcvP family. In terms of assembly, the glycine cleavage system is composed of four proteins: P, T, L and H. Requires pyridoxal 5'-phosphate as cofactor.

The enzyme catalyses N(6)-[(R)-lipoyl]-L-lysyl-[glycine-cleavage complex H protein] + glycine + H(+) = N(6)-[(R)-S(8)-aminomethyldihydrolipoyl]-L-lysyl-[glycine-cleavage complex H protein] + CO2. Functionally, the glycine cleavage system catalyzes the degradation of glycine. The P protein binds the alpha-amino group of glycine through its pyridoxal phosphate cofactor; CO(2) is released and the remaining methylamine moiety is then transferred to the lipoamide cofactor of the H protein. This Mycobacterium bovis (strain ATCC BAA-935 / AF2122/97) protein is Glycine dehydrogenase (decarboxylating).